We begin with the raw amino-acid sequence, 222 residues long: Protein DEHYDRATION-INDUCED 19 homolog 6 (222 aa).

Ser-116 is modified (phosphoserine).

It belongs to the Di19 family. Post-translationally, phosphorylated in vitro by CPK3 or CPK11. As to expression, expressed in seedlings, roots, leaves, stems, flowers and siliques.

It localises to the nucleus. This chain is Protein DEHYDRATION-INDUCED 19 homolog 6 (DI19-6), found in Arabidopsis thaliana (Mouse-ear cress).